Consider the following 236-residue polypeptide: Rho-related GTP-binding protein RhoV (236 aa).

The tract at residues 1–27 is disordered; sequence MPPRELSEAEPPPLRAPTPPPRRRSAP. Positions 10–20 are enriched in pro residues; that stretch reads EPPPLRAPTPP. A Phosphoserine modification is found at Ser25. GTP contacts are provided by residues 38–45, 85–89, and 143–146; these read GDGAVGKS, DTAGQ, and TQAD. Cys234 is lipidated: S-palmitoyl cysteine.

Belongs to the small GTPase superfamily. Rho family. In terms of assembly, interacts with PAK2. It depends on Mg(2+) as a cofactor. As to expression, highly expressed in pancreas, placenta, and fetal brain.

The protein localises to the cell membrane. It is found in the endosome membrane. Functionally, plays a role in the control of the actin cytoskeleton via activation of the JNK pathway. The chain is Rho-related GTP-binding protein RhoV from Homo sapiens (Human).